Reading from the N-terminus, the 122-residue chain is Large ribosomal subunit protein uL14 (122 aa).

It belongs to the universal ribosomal protein uL14 family. Part of the 50S ribosomal subunit. Forms a cluster with proteins L3 and L19. In the 70S ribosome, L14 and L19 interact and together make contacts with the 16S rRNA in bridges B5 and B8.

Binds to 23S rRNA. Forms part of two intersubunit bridges in the 70S ribosome. This is Large ribosomal subunit protein uL14 from Shewanella sp. (strain ANA-3).